A 331-amino-acid chain; its full sequence is Major outer membrane protein P.IB (331 aa).

The N-terminal stretch at 1–19 (MKKSLIALTLAALPVAAMA) is a signal peptide.

The protein belongs to the Gram-negative porin family. As to quaternary structure, homotrimer.

The protein resides in the cell outer membrane. Serves as a slightly cation selective porin. This Neisseria meningitidis serogroup B (strain ATCC BAA-335 / MC58) protein is Major outer membrane protein P.IB (porB).